The chain runs to 371 residues: Leu/Ile/Val-binding protein homolog 1 (371 aa).

The first 23 residues, 1 to 23, serve as a signal peptide directing secretion; the sequence is MRKTLFSGVALAAVIAFGGSAWA.

This sequence belongs to the leucine-binding protein family.

In terms of biological role, component of an amino-acid transport system. This Brucella melitensis biotype 1 (strain ATCC 23456 / CCUG 17765 / NCTC 10094 / 16M) protein is Leu/Ile/Val-binding protein homolog 1.